Here is a 449-residue protein sequence, read N- to C-terminus: Trigger factor (449 aa).

The region spanning 173–258 (GDRVTVDFVG…LKKVEWPHLP (86 aa)) is the PPIase FKBP-type domain.

The protein belongs to the FKBP-type PPIase family. Tig subfamily.

The protein localises to the cytoplasm. The catalysed reaction is [protein]-peptidylproline (omega=180) = [protein]-peptidylproline (omega=0). Involved in protein export. Acts as a chaperone by maintaining the newly synthesized protein in an open conformation. Functions as a peptidyl-prolyl cis-trans isomerase. The chain is Trigger factor from Burkholderia pseudomallei (strain 1710b).